The chain runs to 252 residues: uncharacterized protein (252 aa).

9–33 contacts NADP(+); that stretch reads LITGGSAGIGLELAKRLLELGNEVI. Ser-139 is a substrate binding site. The active-site Proton acceptor is Tyr-152.

Belongs to the short-chain dehydrogenases/reductases (SDR) family.

The protein resides in the cytoplasm. This is an uncharacterized protein from Bacillus subtilis (strain 168).